A 255-amino-acid chain; its full sequence is Ribosomal RNA small subunit methyltransferase A (255 aa).

Residues Asn-12, Leu-14, Gly-39, Glu-60, Asp-84, and Asn-106 each contribute to the S-adenosyl-L-methionine site.

The protein belongs to the class I-like SAM-binding methyltransferase superfamily. rRNA adenine N(6)-methyltransferase family. RsmA subfamily.

Its subcellular location is the cytoplasm. The enzyme catalyses adenosine(1518)/adenosine(1519) in 16S rRNA + 4 S-adenosyl-L-methionine = N(6)-dimethyladenosine(1518)/N(6)-dimethyladenosine(1519) in 16S rRNA + 4 S-adenosyl-L-homocysteine + 4 H(+). Its function is as follows. Specifically dimethylates two adjacent adenosines (A1518 and A1519) in the loop of a conserved hairpin near the 3'-end of 16S rRNA in the 30S particle. May play a critical role in biogenesis of 30S subunits. This chain is Ribosomal RNA small subunit methyltransferase A, found in Janthinobacterium sp. (strain Marseille) (Minibacterium massiliensis).